We begin with the raw amino-acid sequence, 568 residues long: 2-succinyl-5-enolpyruvyl-6-hydroxy-3-cyclohexene-1-carboxylate synthase (568 aa).

This sequence belongs to the TPP enzyme family. MenD subfamily. In terms of assembly, homodimer. Mg(2+) serves as cofactor. Mn(2+) is required as a cofactor. It depends on thiamine diphosphate as a cofactor.

It catalyses the reaction isochorismate + 2-oxoglutarate + H(+) = 5-enolpyruvoyl-6-hydroxy-2-succinyl-cyclohex-3-ene-1-carboxylate + CO2. It participates in quinol/quinone metabolism; 1,4-dihydroxy-2-naphthoate biosynthesis; 1,4-dihydroxy-2-naphthoate from chorismate: step 2/7. The protein operates within quinol/quinone metabolism; menaquinone biosynthesis. Its function is as follows. Catalyzes the thiamine diphosphate-dependent decarboxylation of 2-oxoglutarate and the subsequent addition of the resulting succinic semialdehyde-thiamine pyrophosphate anion to isochorismate to yield 2-succinyl-5-enolpyruvyl-6-hydroxy-3-cyclohexene-1-carboxylate (SEPHCHC). This chain is 2-succinyl-5-enolpyruvyl-6-hydroxy-3-cyclohexene-1-carboxylate synthase, found in Haemophilus influenzae (strain ATCC 51907 / DSM 11121 / KW20 / Rd).